Here is a 308-residue protein sequence, read N- to C-terminus: tRNA dimethylallyltransferase (308 aa).

14 to 21 serves as a coordination point for ATP; that stretch reads GPTASGKS. 16–21 contacts substrate; that stretch reads TASGKS. The segment at 39 to 42 is interaction with substrate tRNA; that stretch reads DSMQ.

Belongs to the IPP transferase family. As to quaternary structure, monomer. Mg(2+) is required as a cofactor.

The catalysed reaction is adenosine(37) in tRNA + dimethylallyl diphosphate = N(6)-dimethylallyladenosine(37) in tRNA + diphosphate. In terms of biological role, catalyzes the transfer of a dimethylallyl group onto the adenine at position 37 in tRNAs that read codons beginning with uridine, leading to the formation of N6-(dimethylallyl)adenosine (i(6)A). The sequence is that of tRNA dimethylallyltransferase from Bradyrhizobium sp. (strain ORS 278).